Consider the following 229-residue polypeptide: Potassium/proton antiporter CemA (229 aa).

3 helical membrane-spanning segments follow: residues 6–26, 107–127, and 189–209; these read AFIP…ISLC, ILHF…SFWG, and ILSG…KYWI.

The protein belongs to the CemA family.

Its subcellular location is the plastid. It localises to the chloroplast inner membrane. It catalyses the reaction K(+)(in) + H(+)(out) = K(+)(out) + H(+)(in). Its function is as follows. Contributes to K(+)/H(+) antiport activity by supporting proton efflux to control proton extrusion and homeostasis in chloroplasts in a light-dependent manner to modulate photosynthesis. Prevents excessive induction of non-photochemical quenching (NPQ) under continuous-light conditions. Indirectly promotes efficient inorganic carbon uptake into chloroplasts. The protein is Potassium/proton antiporter CemA of Lepidium virginicum (Virginia pepperweed).